A 418-amino-acid chain; its full sequence is Bifunctional protein GlmU (418 aa).

The interval 1 to 236 is pyrophosphorylase; the sequence is MAAVIVLAAG…VWQTEGVNDR (236 aa). UDP-N-acetyl-alpha-D-glucosamine is bound by residues 7 to 10, K21, Q74, 79 to 80, 102 to 104, G141, E155, N170, and N234; these read LAAG, GT, and YGD. Position 104 (D104) interacts with Mg(2+). N234 is a Mg(2+) binding site. The segment at 237–257 is linker; the sequence is VQLARMNAEVNRRIVTGWMRA. An N-acetyltransferase region spans residues 258-418; it reads GVTIIDPTST…DDTLNPEADQ (161 aa). Positions 339 and 357 each coordinate UDP-N-acetyl-alpha-D-glucosamine. H369 functions as the Proton acceptor in the catalytic mechanism. A UDP-N-acetyl-alpha-D-glucosamine-binding site is contributed by Y372. A386 is a binding site for acetyl-CoA.

In the N-terminal section; belongs to the N-acetylglucosamine-1-phosphate uridyltransferase family. The protein in the C-terminal section; belongs to the transferase hexapeptide repeat family. Homotrimer. The cofactor is Mg(2+).

It is found in the cytoplasm. It catalyses the reaction alpha-D-glucosamine 1-phosphate + acetyl-CoA = N-acetyl-alpha-D-glucosamine 1-phosphate + CoA + H(+). It carries out the reaction N-acetyl-alpha-D-glucosamine 1-phosphate + UTP + H(+) = UDP-N-acetyl-alpha-D-glucosamine + diphosphate. The protein operates within nucleotide-sugar biosynthesis; UDP-N-acetyl-alpha-D-glucosamine biosynthesis; N-acetyl-alpha-D-glucosamine 1-phosphate from alpha-D-glucosamine 6-phosphate (route II): step 2/2. It functions in the pathway nucleotide-sugar biosynthesis; UDP-N-acetyl-alpha-D-glucosamine biosynthesis; UDP-N-acetyl-alpha-D-glucosamine from N-acetyl-alpha-D-glucosamine 1-phosphate: step 1/1. Its pathway is bacterial outer membrane biogenesis; LPS lipid A biosynthesis. Catalyzes the last two sequential reactions in the de novo biosynthetic pathway for UDP-N-acetylglucosamine (UDP-GlcNAc). The C-terminal domain catalyzes the transfer of acetyl group from acetyl coenzyme A to glucosamine-1-phosphate (GlcN-1-P) to produce N-acetylglucosamine-1-phosphate (GlcNAc-1-P), which is converted into UDP-GlcNAc by the transfer of uridine 5-monophosphate (from uridine 5-triphosphate), a reaction catalyzed by the N-terminal domain. This is Bifunctional protein GlmU from Cutibacterium acnes (strain DSM 16379 / KPA171202) (Propionibacterium acnes).